The sequence spans 156 residues: Small ribosomal subunit protein uS7cz/uS7cy (156 aa).

Belongs to the universal ribosomal protein uS7 family. In terms of assembly, part of the 30S ribosomal subunit.

It localises to the plastid. Its subcellular location is the chloroplast. Its function is as follows. One of the primary rRNA binding proteins, it binds directly to 16S rRNA where it nucleates assembly of the head domain of the 30S subunit. The sequence is that of Small ribosomal subunit protein uS7cz/uS7cy (rps7-A) from Saccharum hybrid (Sugarcane).